The primary structure comprises 223 residues: ATP phosphoribosyltransferase (223 aa).

The protein belongs to the ATP phosphoribosyltransferase family. Short subfamily. In terms of assembly, heteromultimer composed of HisG and HisZ subunits.

The protein resides in the cytoplasm. The enzyme catalyses 1-(5-phospho-beta-D-ribosyl)-ATP + diphosphate = 5-phospho-alpha-D-ribose 1-diphosphate + ATP. Its pathway is amino-acid biosynthesis; L-histidine biosynthesis; L-histidine from 5-phospho-alpha-D-ribose 1-diphosphate: step 1/9. Functionally, catalyzes the condensation of ATP and 5-phosphoribose 1-diphosphate to form N'-(5'-phosphoribosyl)-ATP (PR-ATP). Has a crucial role in the pathway because the rate of histidine biosynthesis seems to be controlled primarily by regulation of HisG enzymatic activity. The chain is ATP phosphoribosyltransferase from Bordetella bronchiseptica (strain ATCC BAA-588 / NCTC 13252 / RB50) (Alcaligenes bronchisepticus).